The following is a 528-amino-acid chain: MIEAPEGLIIVDTGESVDQSRKVLAEFRKISDKPIKAIVYTHFHPDHINGVKAFVSEEQVKSGEVRIYAQETLLDNVVTQGSLVGPILTMRSGYSFGVALSDEDKRDMNAGLGPLAHEGASTFIAPTDTFRDSLDTTIAGLKVQFLHVPSEAPDEIVLYLPDNRVLISAEVTQGPTLPNVHTLRGTKFRDPVVWVASLDKLRAFQADVMVPLHGQPVSGREKVEEVLRMTRDAIAYIHDQTVRWMNKGLTPDELVEKVKLPPHLAGYTPYLREYYGTVKHSVRQIYQGYLGWFQGDPVDLDPIPPAEKARRLIALMGGRDKVLMAAGDAYLKGDWQWAAELSGYAIRVDHDDKLARDIKARSFRRLGYASMNINWRNWYLMSAMELEGKLEGDVALEMSRRVRAAFLSPDMLKNLPARIFLQNWVTRIDPEKSGDVELALGFAFPDIDEAWTLEVRRGVAQLKSGIDPAVPLRLTLDKRYLDTVISGENSLLKGALLGDVKVDGNLLDIKTFLGCFDFEDAPIALTVR.

Residues His42, His44, Asp46, His47, Glu151, and Glu170 each coordinate Zn(2+). Sulfate is bound by residues 179–184 (NVHTLR) and Arg189. His213 provides a ligand contact to Zn(2+). Tyr275 lines the sulfate pocket.

The protein belongs to the metallo-beta-lactamase superfamily. Type III sulfatase family. It depends on Zn(2+) as a cofactor.

The catalysed reaction is a primary linear alkyl sulfate ester + H2O = a primary alcohol + sulfate + H(+). Its function is as follows. Alkylsulfatase that cleaves the widely used detergent sodium dodecyl sulfate (SDS), which allows the bacterium to use SDS as a sole carbon or sulfur source. The polypeptide is Linear primary-alkylsulfatase (Pseudomonas sp. (strain ATCC 19151)).